The following is a 347-amino-acid chain: tRNA pseudouridine synthase D (347 aa).

The active-site Nucleophile is the Asp-78. One can recognise a TRUD domain in the interval 150 to 304 (GLPNFFGPQR…AEGTRRAARL (155 aa)).

This sequence belongs to the pseudouridine synthase TruD family.

The enzyme catalyses uridine(13) in tRNA = pseudouridine(13) in tRNA. In terms of biological role, responsible for synthesis of pseudouridine from uracil-13 in transfer RNAs. The polypeptide is tRNA pseudouridine synthase D (Anaeromyxobacter dehalogenans (strain 2CP-C)).